Here is a 271-residue protein sequence, read N- to C-terminus: Tryptophan synthase alpha chain (271 aa).

Catalysis depends on proton acceptor residues glutamate 49 and aspartate 60.

This sequence belongs to the TrpA family. As to quaternary structure, tetramer of two alpha and two beta chains.

The enzyme catalyses (1S,2R)-1-C-(indol-3-yl)glycerol 3-phosphate + L-serine = D-glyceraldehyde 3-phosphate + L-tryptophan + H2O. The protein operates within amino-acid biosynthesis; L-tryptophan biosynthesis; L-tryptophan from chorismate: step 5/5. Its function is as follows. The alpha subunit is responsible for the aldol cleavage of indoleglycerol phosphate to indole and glyceraldehyde 3-phosphate. The polypeptide is Tryptophan synthase alpha chain (Burkholderia cenocepacia (strain HI2424)).